The chain runs to 62 residues: Pro-MCH variant (62 aa).

The tract at residues 23 to 41 (GSVAFPAENGVQDTESTQE) is NGE-like. Residues 28-62 (PAENGVQDTESTQEKRETGDEENSAQFPIGRRDFD) are disordered. The segment at 44 to 56 (ETGDEENSAQFPI) is NEI-like. Positions 60-62 (DFD) are melanin-concentrating hormone-like.

Belongs to the melanin-concentrating hormone family.

In Hylobates lar (Lar gibbon), this protein is Pro-MCH variant (PMCHL1).